We begin with the raw amino-acid sequence, 99 residues long: NADH-quinone oxidoreductase subunit K 1 (99 aa).

The next 3 helical transmembrane spans lie at 3-23 (PVNYLYLAALLFAIGASGVLV), 28-48 (IVVFMCVELMLNACNLALVTF), and 59-79 (IVAFFTMVVAAAEVVVGLAII).

It belongs to the complex I subunit 4L family. In terms of assembly, NDH-1 is composed of 14 different subunits. Subunits NuoA, H, J, K, L, M, N constitute the membrane sector of the complex.

It localises to the cell membrane. The enzyme catalyses a quinone + NADH + 5 H(+)(in) = a quinol + NAD(+) + 4 H(+)(out). NDH-1 shuttles electrons from NADH, via FMN and iron-sulfur (Fe-S) centers, to quinones in the respiratory chain. The immediate electron acceptor for the enzyme in this species is believed to be a menaquinone. Couples the redox reaction to proton translocation (for every two electrons transferred, four hydrogen ions are translocated across the cytoplasmic membrane), and thus conserves the redox energy in a proton gradient. The protein is NADH-quinone oxidoreductase subunit K 1 of Streptomyces griseus subsp. griseus (strain JCM 4626 / CBS 651.72 / NBRC 13350 / KCC S-0626 / ISP 5235).